Reading from the N-terminus, the 737-residue chain is MESQETAKRPIEPNGAVAAQDAEPATKRVKLDDAPVPQIQEEPSQPQPQPQPQPQTEDEKPTEQRQDDRDKRRGIAPIKKEYLVVPPSQVAKTAEVVDDDAAEGRTAPGAEGAAGKDGKKKRPKGQNKEREFGIFADAQRLCNSVAWTPEFSPRHCKHGERCNALHDIRKYLKEGRRPDLNVFGGKCPVWETHGKCSSGWRCLFVESHMKEIEHEDGRKELVLTEDPTKIKPEAAPLVPPEEESMDARAGVYNVVAPAVKLALSRKKIQHEKSDQYLKWMAKDSELARIHYHKQKDDDDVAKDYAAQYVEPPLKPSEKRRIYFGRETPVLAPLTTQGNLPFRRLCVELGAEITYSEMALGLPLLQGQKADWTLMRAHESEITPPRYTPTGIVDPAYDNSKDLKFGVQITAHAPWIAIKSAETLARYLPHLRVIDLNCGCPIDMVYKSGAGSALLDAPSKLERMIRGMNTVSGEVPVTAKIRMGVRDNHLTAQKLVERLALGAPDIRAVSGAPGCAAVTLHGRTRQQRYTKAADWSYIAECAALVKSFNEKADSLQDTIREADERSLPNGGRMYFVGNGDCYSHVDYFNHVDNAKVDSVMVGRGAIIKPWIFEEISAGQYLDKSATERLAYVEKFAKYGMEAWGSDELGLNYTRRFLLEFLSFFHRYVPIGLLEYLPPAMNDRPPAYKGRNELETLLASKNYLDWIKISEMFLGPAPPNFKFQPKHKSNAYENIEAEG.

Composition is skewed to basic and acidic residues over residues 1 to 11 (MESQETAKRPI) and 24 to 33 (PATKRVKLDD). The tract at residues 1 to 127 (MESQETAKRP…GKKKRPKGQN (127 aa)) is disordered. The span at 35–44 (PVPQIQEEPS) shows a compositional bias: low complexity. Basic and acidic residues predominate over residues 57–82 (EDEKPTEQRQDDRDKRRGIAPIKKEY). 2 consecutive C3H1-type zinc fingers follow at residues 142–166 (CNSV…NALH) and 187–208 (CPVW…VESH). Residues 332–334 (PLT) and Q407 contribute to the FMN site. C439 serves as the catalytic Proton donor. Residues K479, H520, 577-579 (NGD), and 601-602 (GR) contribute to the FMN site.

This sequence belongs to the Dus family. Dus3 subfamily. FMN is required as a cofactor.

The protein localises to the cytoplasm. It is found in the nucleus. It carries out the reaction 5,6-dihydrouridine(47) in tRNA + NAD(+) = uridine(47) in tRNA + NADH + H(+). The enzyme catalyses 5,6-dihydrouridine(47) in tRNA + NADP(+) = uridine(47) in tRNA + NADPH + H(+). The catalysed reaction is a 5,6-dihydrouridine in mRNA + NAD(+) = a uridine in mRNA + NADH + H(+). It catalyses the reaction a 5,6-dihydrouridine in mRNA + NADP(+) = a uridine in mRNA + NADPH + H(+). In terms of biological role, catalyzes the synthesis of dihydrouridine, a modified base found in the D-loop of most tRNAs. Specifically modifies U47 in cytoplasmic tRNAs. Catalyzes the synthesis of dihydrouridine in some mRNAs, thereby affecting their translation. The chain is tRNA-dihydrouridine(47) synthase [NAD(P)(+)] (dus-3) from Neurospora crassa (strain ATCC 24698 / 74-OR23-1A / CBS 708.71 / DSM 1257 / FGSC 987).